The primary structure comprises 263 residues: MNHISKINPKKELSQCFISSTHITDQIVNYAGNISDYSIIEIGPGLGTMTYSILNKNPKKLISIEKDRRLSTIHEKIVEEFQGKYEFILSDALNIDLRDIIEPPVKVIANLPYHIATTLLIKWMDYINFFTSFTLMFQKEVADRIVAQPNNKNYGTLSILIQLLSNVYKMEDFGPEIFSPQPKVMSSVINIIALPEPRFHVNYRKLSQVLKTTFSERRKMIRSTLKKLTNNADEMLESLNIDNNLRPENLSIEQFCQITNCIN.

Isoleucine 18, glycine 43, glutamate 65, aspartate 91, and asparagine 110 together coordinate S-adenosyl-L-methionine.

It belongs to the class I-like SAM-binding methyltransferase superfamily. rRNA adenine N(6)-methyltransferase family. RsmA subfamily.

The protein localises to the cytoplasm. The enzyme catalyses adenosine(1518)/adenosine(1519) in 16S rRNA + 4 S-adenosyl-L-methionine = N(6)-dimethyladenosine(1518)/N(6)-dimethyladenosine(1519) in 16S rRNA + 4 S-adenosyl-L-homocysteine + 4 H(+). In terms of biological role, specifically dimethylates two adjacent adenosines (A1518 and A1519) in the loop of a conserved hairpin near the 3'-end of 16S rRNA in the 30S particle. May play a critical role in biogenesis of 30S subunits. This Ehrlichia chaffeensis (strain ATCC CRL-10679 / Arkansas) protein is Ribosomal RNA small subunit methyltransferase A.